The primary structure comprises 311 residues: Olfactory receptor 4S2 (311 aa).

At 1 to 23 the chain is on the extracellular side; sequence MEKINNVTEFIFWGLSQSPEIEK. An N-linked (GlcNAc...) asparagine glycan is attached at Asn-6. Residues 24 to 47 form a helical membrane-spanning segment; it reads VCFVVFSFFYIIILLGNLLIMLTV. Residues 48 to 55 are Cytoplasmic-facing; the sequence is CLSNLFKS. The chain crosses the membrane as a helical span at residues 56 to 77; it reads PMYFFLSFLSFVDICYSSVTAP. At 78–98 the chain is on the extracellular side; that stretch reads KMIVDLLAKDKTISYVGCMLQ. A disulfide bridge links Cys-95 with Cys-187. A helical transmembrane segment spans residues 99–118; the sequence is LFGVHFFGCTEIFILTVMAY. At 119 to 137 the chain is on the cytoplasmic side; it reads DRYVAICKPLHYMTIMNRE. The helical transmembrane segment at 138–156 threads the bilayer; that stretch reads TCNKMLLGTWVGGFLHSII. Topologically, residues 157–193 are extracellular; it reads QVALVVQLPFCGPNEIDHYFCDVHPVLKLACTETYIV. Residues 194–217 traverse the membrane as a helical segment; sequence GVVVTANSGTIALGSFVILLISYS. The Cytoplasmic segment spans residues 218–233; the sequence is IILVSLRKQSAEGRRK. Residues 234-256 traverse the membrane as a helical segment; that stretch reads ALSTCGSHIAMVVIFFGPCTFMY. At 257–267 the chain is on the extracellular side; it reads MRPDTTFSEDK. The helical transmembrane segment at 268–287 threads the bilayer; that stretch reads MVAVFYTIITPMLNPLIYTL. The Cytoplasmic portion of the chain corresponds to 288-311; that stretch reads RNAEVKNAMKKLWGRNVFLEAKGK.

It belongs to the G-protein coupled receptor 1 family.

It is found in the cell membrane. Its function is as follows. Odorant receptor. The polypeptide is Olfactory receptor 4S2 (OR4S2) (Homo sapiens (Human)).